The chain runs to 527 residues: Protein PyrBI (527 aa).

An aspartate carbamoyltransferase region spans residues 1–342; the sequence is MKRDFLGRTL…MFGGALEAPF (342 aa). The interval 343-357 is linker; it reads DTSKKEEKPEEDFII. Positions 368–527 are aspartate carbamoyltransferase regulatory region; that stretch reads VQKEGKRGIK…PHSFEEIWSI (160 aa). Zn(2+) contacts are provided by C483, C488, C512, and C515.

It in the N-terminal section; belongs to the aspartate/ornithine carbamoyltransferase superfamily. ATCase family. The protein in the C-terminal section; belongs to the PyrI family.

The enzyme catalyses carbamoyl phosphate + L-aspartate = N-carbamoyl-L-aspartate + phosphate + H(+). It participates in pyrimidine metabolism; UMP biosynthesis via de novo pathway; (S)-dihydroorotate from bicarbonate: step 2/3. This Thermotoga maritima (strain ATCC 43589 / DSM 3109 / JCM 10099 / NBRC 100826 / MSB8) protein is Protein PyrBI (pyrBI).